Reading from the N-terminus, the 142-residue chain is Large ribosomal subunit protein bL27m (142 aa).

A disordered region spans residues 27 to 48; that stretch reads TKKSAGSTKNGRTSQPKNLGLK. Residues 30–43 show a composition bias toward polar residues; sequence SAGSTKNGRTSQPK.

This sequence belongs to the bacterial ribosomal protein bL27 family.

The protein localises to the mitochondrion. The polypeptide is Large ribosomal subunit protein bL27m (mrpl27) (Dictyostelium discoideum (Social amoeba)).